Here is a 135-residue protein sequence, read N- to C-terminus: Ribosome-binding factor A (135 aa).

It belongs to the RbfA family. Monomer. Binds 30S ribosomal subunits, but not 50S ribosomal subunits or 70S ribosomes.

It is found in the cytoplasm. In terms of biological role, one of several proteins that assist in the late maturation steps of the functional core of the 30S ribosomal subunit. Associates with free 30S ribosomal subunits (but not with 30S subunits that are part of 70S ribosomes or polysomes). Required for efficient processing of 16S rRNA. May interact with the 5'-terminal helix region of 16S rRNA. The polypeptide is Ribosome-binding factor A (Caldicellulosiruptor saccharolyticus (strain ATCC 43494 / DSM 8903 / Tp8T 6331)).